Reading from the N-terminus, the 36-residue chain is Photosystem I reaction center subunit VIII (36 aa).

A helical membrane pass occupies residues 9–29; it reads IFVPLVGLVFPAIAMASLSLY.

Belongs to the PsaI family.

The protein localises to the plastid. It localises to the chloroplast thylakoid membrane. In terms of biological role, may help in the organization of the PsaL subunit. The protein is Photosystem I reaction center subunit VIII of Phalaenopsis aphrodite subsp. formosana (Moth orchid).